Reading from the N-terminus, the 613-residue chain is Protein ECM3 (613 aa).

A run of 4 helical transmembrane segments spans residues 10–30, 74–94, 106–126, and 143–163; these read IWAS…GFGL, GIIC…AFIV, GGIL…AYLQ, and VANV…LGGF. The tract at residues 177-256 is disordered; that stretch reads DEENTLTNDD…PAIDDRSSNS (80 aa). Composition is skewed to polar residues over residues 187–206 and 213–226; these read SAQQ…SNQD and ESTV…SYIS. Residues Ser-291 and Ser-338 each carry the phosphoserine modification. A disordered region spans residues 345–366; sequence RRRKSSISSQGAPSVLQADGTI. The next 4 membrane-spanning stretches (helical) occupy residues 432 to 452, 471 to 491, 546 to 566, and 587 to 607; these read MAVI…LFVT, FIMD…LILL, MLLF…LIYF, and FLML…SYFI.

It is found in the endoplasmic reticulum membrane. In terms of biological role, may be involved in cell wall organization and biogenesis. In Saccharomyces cerevisiae (strain ATCC 204508 / S288c) (Baker's yeast), this protein is Protein ECM3 (ECM3).